Consider the following 616-residue polypeptide: TAF6-like RNA polymerase II p300/CBP-associated factor-associated factor 65 kDa subunit 6L (616 aa).

Disordered stretches follow at residues 399–432 (SLLL…EDPS) and 455–539 (FGTG…GTRD). Ser-494 and Ser-500 each carry phosphoserine. Residues Arg-549, Arg-555, and Arg-587 each carry the asymmetric dimethylarginine modification.

This sequence belongs to the TAF6 family. The PCAF complex is composed of a number of TBP-associated factors (TAFS), such as TAF5, TAF5L, TAF6, TAF6L, TAF9, TAF10 and TAF12, PCAF, and also PCAF-associated factors (PAFs), such as TADA2L/ADA2, TADA3L/ADA3 and SPT3. Component of the STAGA transcription coactivator-HAT complex, at least composed of SUPT3H, GCN5L2, TAF5L, TAF6L, SUPT7L, TADA3L, TAD1L, TAF10, TAF12, TRRAP and TAF9.

It is found in the nucleus. Functions as a component of the PCAF complex. The PCAF complex is capable of efficiently acetylating histones in a nucleosomal context. The PCAF complex could be considered as the human version of the yeast SAGA complex. With TAF5L, acts as an epigenetic regulator essential for somatic reprogramming. Regulates target genes through H3K9ac deposition and MYC recruitment which trigger MYC regulatory network to orchestrate gene expression programs to control embryonic stem cell state. Functions with MYC to activate target gene expression through RNA polymerase II pause release. The polypeptide is TAF6-like RNA polymerase II p300/CBP-associated factor-associated factor 65 kDa subunit 6L (Mus musculus (Mouse)).